The sequence spans 255 residues: 5'-nucleotidase SurE (255 aa).

A divalent metal cation is bound by residues aspartate 8, aspartate 9, serine 39, and asparagine 95.

It belongs to the SurE nucleotidase family. The cofactor is a divalent metal cation.

It is found in the cytoplasm. It carries out the reaction a ribonucleoside 5'-phosphate + H2O = a ribonucleoside + phosphate. Its function is as follows. Nucleotidase that shows phosphatase activity on nucleoside 5'-monophosphates. The chain is 5'-nucleotidase SurE from Rubrivivax gelatinosus (strain NBRC 100245 / IL144).